A 230-amino-acid polypeptide reads, in one-letter code: Ribonuclease 3 (230 aa).

An RNase III domain is found at V6–G135. E48 serves as a coordination point for Mg(2+). The active site involves D52. Mg(2+) contacts are provided by D121 and E124. E124 is an active-site residue. The DRBM domain occupies D161–A230.

The protein belongs to the ribonuclease III family. Homodimer. Mg(2+) is required as a cofactor.

Its subcellular location is the cytoplasm. It catalyses the reaction Endonucleolytic cleavage to 5'-phosphomonoester.. Digests double-stranded RNA. Involved in the processing of primary rRNA transcript to yield the immediate precursors to the large and small rRNAs (23S and 16S). Processes some mRNAs, and tRNAs when they are encoded in the rRNA operon. Processes pre-crRNA and tracrRNA of type II CRISPR loci if present in the organism. In Latilactobacillus sakei subsp. sakei (strain 23K) (Lactobacillus sakei subsp. sakei), this protein is Ribonuclease 3.